A 315-amino-acid chain; its full sequence is Small ribosomal subunit biogenesis GTPase RsgA (315 aa).

The 165-residue stretch at 82–246 (DQFKSKVLAA…LIDSPGFQEF (165 aa)) folds into the CP-type G domain. Residues 130-133 (NKID) and 184-192 (GQSGMGKSS) each bind GTP. Residues cysteine 270, cysteine 275, histidine 277, and cysteine 283 each coordinate Zn(2+).

It belongs to the TRAFAC class YlqF/YawG GTPase family. RsgA subfamily. In terms of assembly, monomer. Associates with 30S ribosomal subunit, binds 16S rRNA. The cofactor is Zn(2+).

The protein resides in the cytoplasm. In terms of biological role, one of several proteins that assist in the late maturation steps of the functional core of the 30S ribosomal subunit. Helps release RbfA from mature subunits. May play a role in the assembly of ribosomal proteins into the subunit. Circularly permuted GTPase that catalyzes slow GTP hydrolysis, GTPase activity is stimulated by the 30S ribosomal subunit. The chain is Small ribosomal subunit biogenesis GTPase RsgA from Ralstonia pickettii (strain 12J).